A 181-amino-acid chain; its full sequence is Ion-translocating oxidoreductase complex subunit B (181 aa).

Residues 1-26 form a hydrophobic region; the sequence is MLEAVSAVMSLGGMALFAGLGLGYAA. Residues 32-90 form the 4Fe-4S domain; sequence EADPVVEKLEALLPATNCGMCGHPGCGPYAQAITEGEAINLCTPGGKAVMESIAAMLGV. [4Fe-4S] cluster is bound by residues cysteine 49, cysteine 52, cysteine 57, cysteine 73, cysteine 110, cysteine 113, cysteine 116, cysteine 120, cysteine 140, cysteine 143, cysteine 146, and cysteine 150. 4Fe-4S ferredoxin-type domains are found at residues 101-130 and 131-160; these read KVAY…GANK and QSHT…MQPV.

This sequence belongs to the 4Fe4S bacterial-type ferredoxin family. RnfB subfamily. As to quaternary structure, the complex is composed of six subunits: RnfA, RnfB, RnfC, RnfD, RnfE and RnfG. [4Fe-4S] cluster is required as a cofactor.

The protein resides in the cell inner membrane. Part of a membrane-bound complex that couples electron transfer with translocation of ions across the membrane. The protein is Ion-translocating oxidoreductase complex subunit B of Magnetococcus marinus (strain ATCC BAA-1437 / JCM 17883 / MC-1).